Reading from the N-terminus, the 210-residue chain is Thymidylate kinase (210 aa).

13-20 contributes to the ATP binding site; it reads GLEGAGKS.

The protein belongs to the thymidylate kinase family.

The enzyme catalyses dTMP + ATP = dTDP + ADP. Phosphorylation of dTMP to form dTDP in both de novo and salvage pathways of dTTP synthesis. The polypeptide is Thymidylate kinase (Shewanella loihica (strain ATCC BAA-1088 / PV-4)).